The following is a 283-amino-acid chain: Alpha-ketoglutarate-dependent taurine dioxygenase (283 aa).

Residues histidine 70, tyrosine 73, and asparagine 95 each coordinate taurine. Residues histidine 99 and aspartate 101 each coordinate Fe cation. Valine 102 serves as a coordination point for taurine. Residue threonine 126 participates in 2-oxoglutarate binding. A 3-hydroxytryptophan; by autocatalysis mark is found at tryptophan 128, tryptophan 240, and tryptophan 248. Histidine 255 is a Fe cation binding site. Residues histidine 255, arginine 266, and arginine 270 each coordinate 2-oxoglutarate. Arginine 270 contributes to the taurine binding site.

Belongs to the TfdA dioxygenase family. Homodimer. Was later shown to be a homotetramer arranged as a dimer of two dimers. Requires Fe(2+) as cofactor.

The enzyme catalyses taurine + 2-oxoglutarate + O2 = aminoacetaldehyde + sulfite + succinate + CO2 + H(+). It functions in the pathway organosulfur degradation; taurine degradation via aerobic pathway; aminoacetaldehyde and sulfite from taurine: step 1/1. With respect to regulation, activated by ascorbate and inhibited by divalent metal ions such as zinc, copper and cobalt. Its function is as follows. Catalyzes the alpha-ketoglutarate-dependent hydroxylation of taurine yielding sulfite and aminoacetaldehyde after decomposition of an unstable intermediate. Is required for the utilization of taurine (2-aminoethanesulfonate) as an alternative sulfur source for growth in the absence of sulfate. To a lesser extent, pentanesulfonate, 3-(N-morpholino)propanesulfonate and 1,3-dioxo-2-isoindolineethanesulfonate are also desulfonated by this enzyme in vitro; however, desulfonation by TauD of organosulfonates other than taurine seem to be of little or no importance for sulfur metabolism in vivo. In Escherichia coli (strain K12), this protein is Alpha-ketoglutarate-dependent taurine dioxygenase (tauD).